A 148-amino-acid chain; its full sequence is MARIPTAALGCISLLCLQLPGSLSRSLGGDPRPVKPREPPARSPSSSLQPRHPAPRPVVWKLHRALQAQRGAGLAPVMGQPLRDGGRQHSGPRRHSGPRRTQAQLLRVGCVLGTCQVQNLSHRLWQLMGPAGRQDSAPVDPSSPHSYG.

The first 24 residues, 1–24 (MARIPTAALGCISLLCLQLPGSLS), serve as a signal peptide directing secretion. A propeptide spanning residues 25–98 (RSLGGDPRPV…HSGPRRHSGP (74 aa)) is cleaved from the precursor. 2 disordered regions span residues 26–57 (SLGG…APRP) and 70–101 (RGAG…PRRT). Cysteines 110 and 115 form a disulfide. Tyr147 bears the Tyrosine amide mark.

This sequence belongs to the adrenomedullin family. As to expression, expressed in the esophagus, stomach, jejunum, ileum, ileocecum, ascending colon, transverse colon, descending colon and rectum. Expressed in myocardial cells of the heart, renal tubular cells, hypothalamus, and pituitary.

Its subcellular location is the secreted. In terms of biological role, intermedin/ADM2 is a peptide hormone that plays a role as physiological regulator of gastrointestinal and cardiovascular bioactivities mediated by the CALCRL-RAMPs receptor complexes. Activates the cAMP-dependent pathway through interaction with CALCRL-RAMP3 receptor complex. In Homo sapiens (Human), this protein is Protein ADM2.